Here is a 358-residue protein sequence, read N- to C-terminus: DNA polymerase IV (358 aa).

The 182-residue stretch at 4 to 185 folds into the UmuC domain; the sequence is IIHIDMDCYF…LSLRKIPGVG (182 aa). Aspartate 8 and aspartate 103 together coordinate Mg(2+). The active site involves glutamate 104.

This sequence belongs to the DNA polymerase type-Y family. Monomer. Mg(2+) serves as cofactor.

It is found in the cytoplasm. It carries out the reaction DNA(n) + a 2'-deoxyribonucleoside 5'-triphosphate = DNA(n+1) + diphosphate. In terms of biological role, poorly processive, error-prone DNA polymerase involved in untargeted mutagenesis. Copies undamaged DNA at stalled replication forks, which arise in vivo from mismatched or misaligned primer ends. These misaligned primers can be extended by PolIV. Exhibits no 3'-5' exonuclease (proofreading) activity. May be involved in translesional synthesis, in conjunction with the beta clamp from PolIII. In Shewanella baltica (strain OS185), this protein is DNA polymerase IV.